A 266-amino-acid polypeptide reads, in one-letter code: Undecaprenyl-diphosphatase (266 aa).

8 consecutive transmembrane segments (helical) span residues 4-24 (ILRV…PISS), 39-59 (LPIV…IIYY), 88-108 (LNLI…GIFI), 114-134 (LFTF…LFLI), 147-167 (IFFS…PGIS), 186-206 (SLEI…FLKY), 214-234 (IIFN…FGLF), and 246-266 (SKLY…YFLV).

It belongs to the UppP family.

The protein localises to the cell inner membrane. The enzyme catalyses di-trans,octa-cis-undecaprenyl diphosphate + H2O = di-trans,octa-cis-undecaprenyl phosphate + phosphate + H(+). Catalyzes the dephosphorylation of undecaprenyl diphosphate (UPP). Confers resistance to bacitracin. The chain is Undecaprenyl-diphosphatase from Borrelia recurrentis (strain A1).